The sequence spans 243 residues: Mannosyl-3-phosphoglycerate phosphatase (243 aa).

The Nucleophile role is filled by Asp8. Residues Asp8, Asp10, Ser169, and Asp204 each coordinate Mg(2+).

Belongs to the HAD-like hydrolase superfamily. MPGP family. It depends on Mg(2+) as a cofactor.

The protein localises to the cytoplasm. It catalyses the reaction 2-O-(alpha-D-mannosyl)-3-phosphoglycerate + H2O = (2R)-2-O-(alpha-D-mannosyl)-glycerate + phosphate. It functions in the pathway carbohydrate biosynthesis; 2-(alpha-D-mannosyl)-D-glycerate biosynthesis; 2-(alpha-D-mannosyl)-D-glycerate from GDP-alpha-D-mannose (MPG route): step 2/2. Hydrolyzes mannosyl-3-phosphoglycerate (MPG) to form the osmolyte mannosylglycerate (MG). The enzyme is absolutely specific for MPG. This chain is Mannosyl-3-phosphoglycerate phosphatase, found in Pyrococcus horikoshii (strain ATCC 700860 / DSM 12428 / JCM 9974 / NBRC 100139 / OT-3).